Reading from the N-terminus, the 568-residue chain is Protein yellow (568 aa).

An N-terminal signal peptide occupies residues 1-28 (MHAQDKGGILPALSLLLIAVAMVSPSQA). 2 N-linked (GlcNAc...) asparagine glycosylation sites follow: Asn151 and Asn222.

Belongs to the major royal jelly protein family.

Its subcellular location is the secreted. Functionally, controls the pigmentation pattern of the adult cuticle and larval mouth parts. This chain is Protein yellow (y), found in Drosophila madeirensis (Fruit fly).